The sequence spans 246 residues: tRNA pseudouridine synthase A (246 aa).

Catalysis depends on aspartate 52, which acts as the Nucleophile. Residue tyrosine 112 participates in substrate binding.

It belongs to the tRNA pseudouridine synthase TruA family. In terms of assembly, homodimer.

It carries out the reaction uridine(38/39/40) in tRNA = pseudouridine(38/39/40) in tRNA. Its function is as follows. Formation of pseudouridine at positions 38, 39 and 40 in the anticodon stem and loop of transfer RNAs. In Pelagibacter ubique (strain HTCC1062), this protein is tRNA pseudouridine synthase A.